A 215-amino-acid polypeptide reads, in one-letter code: Cytochrome b6 (215 aa).

A helical transmembrane segment spans residues 32-52; that stretch reads IFYCLGGITLTCFLVQVATGF. Position 35 (C35) interacts with heme c. Positions 86 and 100 each coordinate heme b. The next 3 membrane-spanning stretches (helical) occupy residues 90-110, 116-136, and 186-206; these read ASMM…TGGF, LTWV…VTGY, and LHTF…FLMI. 2 residues coordinate heme b: H187 and H202.

Belongs to the cytochrome b family. PetB subfamily. As to quaternary structure, the 4 large subunits of the cytochrome b6-f complex are cytochrome b6, subunit IV (17 kDa polypeptide, PetD), cytochrome f and the Rieske protein, while the 4 small subunits are PetG, PetL, PetM and PetN. The complex functions as a dimer. Heme b is required as a cofactor. Requires heme c as cofactor.

It localises to the plastid. It is found in the chloroplast thylakoid membrane. Component of the cytochrome b6-f complex, which mediates electron transfer between photosystem II (PSII) and photosystem I (PSI), cyclic electron flow around PSI, and state transitions. The sequence is that of Cytochrome b6 from Hordeum vulgare (Barley).